Consider the following 63-residue polypeptide: Potassium channel toxin Sp4 (63 aa).

An N-terminal signal peptide occupies residues 1 to 20; sequence MNKVHFALFLLVLTVLAVSG. Cystine bridges form between Cys31/Cys53, Cys38/Cys58, and Cys42/Cys60.

The protein belongs to the long chain scorpion toxin family. Class 2 subfamily. Expressed by the venom gland.

It localises to the secreted. In terms of biological role, this recombinant toxin selectively inhibits mouse voltage-gated potassium channel Kv1.3/KCNA3 (IC(50)=24.73 nM). The polypeptide is Potassium channel toxin Sp4 (Scorpiops pococki (Scorpion)).